Reading from the N-terminus, the 265-residue chain is 4-hydroxy-tetrahydrodipicolinate reductase (265 aa).

NAD(+) contacts are provided by residues 7–12 (GASGRM), D33, 96–98 (GTT), and 120–123 (AANF). H153 (proton donor/acceptor) is an active-site residue. Residue H154 participates in (S)-2,3,4,5-tetrahydrodipicolinate binding. The active-site Proton donor is K157. 163-164 (GT) serves as a coordination point for (S)-2,3,4,5-tetrahydrodipicolinate.

This sequence belongs to the DapB family.

It is found in the cytoplasm. It catalyses the reaction (S)-2,3,4,5-tetrahydrodipicolinate + NAD(+) + H2O = (2S,4S)-4-hydroxy-2,3,4,5-tetrahydrodipicolinate + NADH + H(+). The catalysed reaction is (S)-2,3,4,5-tetrahydrodipicolinate + NADP(+) + H2O = (2S,4S)-4-hydroxy-2,3,4,5-tetrahydrodipicolinate + NADPH + H(+). It functions in the pathway amino-acid biosynthesis; L-lysine biosynthesis via DAP pathway; (S)-tetrahydrodipicolinate from L-aspartate: step 4/4. Catalyzes the conversion of 4-hydroxy-tetrahydrodipicolinate (HTPA) to tetrahydrodipicolinate. The sequence is that of 4-hydroxy-tetrahydrodipicolinate reductase from Cupriavidus taiwanensis (strain DSM 17343 / BCRC 17206 / CCUG 44338 / CIP 107171 / LMG 19424 / R1) (Ralstonia taiwanensis (strain LMG 19424)).